The following is a 274-amino-acid chain: Transcription factor MYB32 (274 aa).

HTH myb-type domains follow at residues Lys9–Leu61 and Arg62–Leu116. DNA-binding regions (H-T-H motif) lie at residues Trp37–Leu61 and Trp89–Val112. Residues Pro123–Thr144 form a disordered region.

As to expression, mostly expressed in roots, and, to a lower extent, in stems, flower buds, and siliques.

It localises to the nucleus. This chain is Transcription factor MYB32 (MYB32), found in Arabidopsis thaliana (Mouse-ear cress).